Here is a 367-residue protein sequence, read N- to C-terminus: Inhibin alpha chain (367 aa).

Positions 1–20 (MVPPLPLLLLLLLVPQGGHG) are cleaved as a signal peptide. Residues 21–63 (CQGSELDREIVLAKVRALFLDALGPPAVTGEGGDPGVRRLPRR) constitute a propeptide that is removed on maturation. Positions 64-233 (HALGGFARRG…PPSGGERTRR (170 aa)) are cleaved as a propeptide — inhibin alpha N-terminal region. 2 N-linked (GlcNAc...) asparagine glycosylation sites follow: Asn-147 and Asn-269. Intrachain disulfides connect Cys-263-Cys-329, Cys-292-Cys-364, and Cys-296-Cys-366.

This sequence belongs to the TGF-beta family. Dimeric, linked by one or more disulfide bonds. Activin B is a dimer of alpha and beta-B. Inhibin A is a dimer of alpha and beta-A. Inhibin B is a dimer of alpha and beta-B. Interacts with TGFBR3L; this interaction regulates female fertility. Post-translationally, proteolytic processing yields a number of bioactive forms, consisting either solely of the mature alpha chain, of the most N-terminal propeptide linked through a disulfide bond to the mature alpha chain, or of the entire proprotein.

Its subcellular location is the secreted. Functionally, inhibins and activins inhibit and activate, respectively, the secretion of follitropin by the pituitary gland. Inhibins/activins are involved in regulating a number of diverse functions such as hypothalamic and pituitary hormone secretion, gonadal hormone secretion, germ cell development and maturation, erythroid differentiation, insulin secretion, nerve cell survival, embryonic axial development or bone growth, depending on their subunit composition. Inhibins appear to oppose the functions of activins. Its function is as follows. Inhibin A is a dimer of alpha/INHA and beta-A/INHBA that functions as a feedback regulator in the hypothalamic-pituitary-gonadal (HPG) axis. Inhibits the secretion of FSH from the anterior pituitary gland by acting on pituitary gonadotrope cells. Antagonizes activin A by binding to the proteoglycan, betaglycan, and forming a stable complex with and, thereby, sequestering type II activin receptors while excluding type I receptor. In terms of biological role, inhibin B is a dimer of alpha and beta-B that plays a crucial role in the regulation of the reproductive system by inhibiting the secretion of follicle-stimulating hormone (FSH) from the anterior pituitary gland. Thereby, maintains reproductive homeostasis in both males and females. Acts as a more potent suppressor of FSH release than inhibin A. Functions as competitive receptor antagonist binding activin type II receptors with high affinity in the presence of the TGF-beta type III coreceptor/TGFBR3L. The chain is Inhibin alpha chain (INHA) from Equus caballus (Horse).